A 323-amino-acid chain; its full sequence is tRNA dimethylallyltransferase (323 aa).

12 to 19 (GPTAAGKT) contributes to the ATP binding site. Substrate is bound at residue 14 to 19 (TAAGKT). 2 interaction with substrate tRNA regions span residues 37–40 (DSAL) and 161–165 (QRLIR).

The protein belongs to the IPP transferase family. Monomer. Mg(2+) serves as cofactor.

It carries out the reaction adenosine(37) in tRNA + dimethylallyl diphosphate = N(6)-dimethylallyladenosine(37) in tRNA + diphosphate. Catalyzes the transfer of a dimethylallyl group onto the adenine at position 37 in tRNAs that read codons beginning with uridine, leading to the formation of N6-(dimethylallyl)adenosine (i(6)A). This is tRNA dimethylallyltransferase from Pseudomonas entomophila (strain L48).